The primary structure comprises 212 residues: Pyridoxine/pyridoxamine 5'-phosphate oxidase (212 aa).

Residues 8 to 11 (RREY) and lysine 66 contribute to the substrate site. FMN contacts are provided by residues 61–66 (RIVLLK), 76–77 (FT), arginine 82, lysine 83, and glutamine 105. Residues tyrosine 123, arginine 127, and serine 131 each coordinate substrate. FMN is bound by residues 140 to 141 (QS) and tryptophan 185. Residue 191–193 (RLH) participates in substrate binding. An FMN-binding site is contributed by arginine 195.

This sequence belongs to the pyridoxamine 5'-phosphate oxidase family. Homodimer. FMN serves as cofactor.

It catalyses the reaction pyridoxamine 5'-phosphate + O2 + H2O = pyridoxal 5'-phosphate + H2O2 + NH4(+). The enzyme catalyses pyridoxine 5'-phosphate + O2 = pyridoxal 5'-phosphate + H2O2. It functions in the pathway cofactor metabolism; pyridoxal 5'-phosphate salvage; pyridoxal 5'-phosphate from pyridoxamine 5'-phosphate: step 1/1. The protein operates within cofactor metabolism; pyridoxal 5'-phosphate salvage; pyridoxal 5'-phosphate from pyridoxine 5'-phosphate: step 1/1. In terms of biological role, catalyzes the oxidation of either pyridoxine 5'-phosphate (PNP) or pyridoxamine 5'-phosphate (PMP) into pyridoxal 5'-phosphate (PLP). The polypeptide is Pyridoxine/pyridoxamine 5'-phosphate oxidase (Shewanella sp. (strain ANA-3)).